A 598-amino-acid polypeptide reads, in one-letter code: Arginine--tRNA ligase (598 aa).

The 'HIGH' region motif lies at 139–149 (ANPTGPMHVGH).

Belongs to the class-I aminoacyl-tRNA synthetase family. Monomer.

The protein localises to the cytoplasm. It carries out the reaction tRNA(Arg) + L-arginine + ATP = L-arginyl-tRNA(Arg) + AMP + diphosphate. This chain is Arginine--tRNA ligase, found in Bradyrhizobium sp. (strain BTAi1 / ATCC BAA-1182).